The primary structure comprises 72 residues: Translation initiation factor IF-1 (72 aa).

The S1-like domain maps to 1–72 (MPKDDSIEVE…TRGRITYRAK (72 aa)).

It belongs to the IF-1 family. Component of the 30S ribosomal translation pre-initiation complex which assembles on the 30S ribosome in the order IF-2 and IF-3, IF-1 and N-formylmethionyl-tRNA(fMet); mRNA recruitment can occur at any time during PIC assembly.

It is found in the cytoplasm. In terms of biological role, one of the essential components for the initiation of protein synthesis. Stabilizes the binding of IF-2 and IF-3 on the 30S subunit to which N-formylmethionyl-tRNA(fMet) subsequently binds. Helps modulate mRNA selection, yielding the 30S pre-initiation complex (PIC). Upon addition of the 50S ribosomal subunit IF-1, IF-2 and IF-3 are released leaving the mature 70S translation initiation complex. This Myxococcus xanthus (strain DK1622) protein is Translation initiation factor IF-1.